We begin with the raw amino-acid sequence, 365 residues long: Probable ethanolamine-phosphate cytidylyltransferase (365 aa).

The tract at residues 344–365 (EERQRRKMGKNATEQTTIKTYA) is disordered. The span at 355–365 (ATEQTTIKTYA) shows a compositional bias: polar residues.

It belongs to the cytidylyltransferase family.

It catalyses the reaction phosphoethanolamine + CTP + H(+) = CDP-ethanolamine + diphosphate. It participates in phospholipid metabolism; phosphatidylethanolamine biosynthesis; phosphatidylethanolamine from ethanolamine: step 2/3. This chain is Probable ethanolamine-phosphate cytidylyltransferase, found in Schizosaccharomyces pombe (strain 972 / ATCC 24843) (Fission yeast).